Consider the following 1502-residue polypeptide: Rho GTPase-activating protein 5 (1502 aa).

FF domains are found at residues 267–325 (QLVV…HIEQ), 366–420 (KLME…HVQH), 427–481 (RVEM…HQRE), and 482–548 (IVEK…HIGF). A 3'-nitrotyrosine modification is found at tyrosine 550. Serine 590 and serine 765 each carry phosphoserine. A pG1 pseudoGTPase domain is found at 590–763 (STNIDKVNLF…LESVKHNLDV (174 aa)). A pG2 pseudoGTPase domain is found at 779 to 944 (RIVMCAMCGD…FSDVLEKKNM (166 aa)). Phosphoserine is present on residues serine 951 and serine 968. 3 disordered regions span residues 975–1004 (YNNYPDSDDDTEAPPPYSPIGDDVQLLPTP), 1022–1050 (HSTPNCHDHERNHKVPPPIKPKPVVPKTN), and 1069–1089 (NPRKQTSRVPLAHPEDMDPSD). The segment covering 1036–1045 (VPPPIKPKPV) has biased composition (pro residues). Position 1115 is a phosphoserine (serine 1115). Disordered stretches follow at residues 1125 to 1156 (FVNNTQGDEENGFSDRTSKSHGERRPSKYKYK) and 1168 to 1254 (YRRT…TRRN). The span at 1140–1150 (RTSKSHGERRP) shows a compositional bias: basic and acidic residues. Phosphoserine is present on residues serine 1173, serine 1176, serine 1195, serine 1202, and serine 1218. The Rho-GAP domain maps to 1262–1449 (MPLQDLVTAE…TFIQQCQFFF (188 aa)).

In terms of assembly, may interact with RASA1/p120GAP. Detected in skin fibroblasts (at protein level).

The protein localises to the cytoplasm. It localises to the cell membrane. In terms of biological role, GTPase-activating protein for Rho family members. In Homo sapiens (Human), this protein is Rho GTPase-activating protein 5 (ARHGAP5).